Here is a 156-residue protein sequence, read N- to C-terminus: Small ribosomal subunit protein uS7 (156 aa).

It belongs to the universal ribosomal protein uS7 family. Part of the 30S ribosomal subunit. Contacts proteins S9 and S11.

In terms of biological role, one of the primary rRNA binding proteins, it binds directly to 16S rRNA where it nucleates assembly of the head domain of the 30S subunit. Is located at the subunit interface close to the decoding center, probably blocks exit of the E-site tRNA. This Bacillus cereus (strain G9842) protein is Small ribosomal subunit protein uS7.